Consider the following 488-residue polypeptide: UDP-glycosyltransferase 92A1 (488 aa).

UDP-alpha-D-glucose-binding positions include serine 292, 358–360, 375–383, and 397–400; these read APQ, HCGWNSILE, and AAEQ.

This sequence belongs to the UDP-glycosyltransferase family.

This chain is UDP-glycosyltransferase 92A1 (UGT92A1), found in Arabidopsis thaliana (Mouse-ear cress).